The sequence spans 338 residues: Ketoreductase azaE (338 aa).

NADP(+) contacts are provided by lysine 41 and tyrosine 166.

It belongs to the NAD(P)-dependent epimerase/dehydratase family. Dihydroflavonol-4-reductase subfamily.

It participates in secondary metabolite biosynthesis. In terms of biological role, ketoreductase; part of the gene cluster that mediates the biosynthesis of azaphilones, a class of fungal metabolites characterized by a highly oxygenated pyrano-quinone bicyclic core and exhibiting a broad range of bioactivities. In the first step, the non-reducing polyketide synthase azaA forms the hexaketide precursor from successive condensations of five malonyl-CoA units, presumably with a simple acetyl-CoA starter unit. The reactive polyketide chain then undergoes a PT-mediated C2-C7 cyclization to afford the aromatic ring and is eventually released as an aldehyde through the R-domain. The putative ketoreductase azaE is proposed to catalyze the reduction of the terminal ketone resulting in the early culture product FK17-P2a. The monooxygenase azaH was demonstrated to be the only enzyme required to convert FK17-P2a to azanigerone E. AzaH first hydroxylates the benzaldehyde intermediate FK17-P2a at C4, which triggers the formation of the pyran-ring to afford azanigerone E. In parallel, the 2,4-dimethylhexanoyl chain is synthesized by the HR-PKS azaB and is proposed to be transferred to the C4-hydroxyl of azanigerone E by the acyltransferase azaD directly from the ACP domain of azaB. Alternatively, the 2,4-dimethyl-hexanoyl chain may be offloaded from the HR-PKS as a carboxylic acid and converted to an acyl-CoA by azaF. The resulting acyl-CoA molecule could then be taken up as a substrate by AzaD to form azanigerone B. To yield the carboxylic acid substituent in azanigerone A, the hydroxypropyl side chain of azanigerone B would need to undergo a C-C oxidative cleavage catalyzed by cytochrome P450 AzaI. AzaI is proposed to act on a vicinal diol that leads to a C-C bond scission either through an alkoxyradical intermediate or a peroxy complex. In the biosynthesis of azanigerone A, azanigerone B first undergoes hydroxylation at C10, possibly catalyzed by one of the two FAD-dependent monooxygenases encoded in the cluster, azaG or azaL, resulting in the vicinal diol azanigerone C. Oxidative cleavage of azanigerone C by azaI would yield the corresponding aldehyde derivative of azanigerone A. Finally, the dehydrogenase azaJ is proposed to convert the aldehyde functional group into the carboxylic acid, completing the conversion from azanigerone B to azanigerone A. Alternatively, the oxidation of aldehyde to carboxylic acid may be catalyzed by the same P450 enzyme azaI via consecutive oxidation or by endogenous alcohol dehydrogenase. This is Ketoreductase azaE from Aspergillus niger (strain ATCC 1015 / CBS 113.46 / FGSC A1144 / LSHB Ac4 / NCTC 3858a / NRRL 328 / USDA 3528.7).